A 268-amino-acid polypeptide reads, in one-letter code: tRNA pseudouridine synthase A (268 aa).

Residue Asp63 is the Nucleophile of the active site. Tyr122 lines the substrate pocket.

Belongs to the tRNA pseudouridine synthase TruA family. As to quaternary structure, homodimer.

The catalysed reaction is uridine(38/39/40) in tRNA = pseudouridine(38/39/40) in tRNA. Its function is as follows. Formation of pseudouridine at positions 38, 39 and 40 in the anticodon stem and loop of transfer RNAs. This is tRNA pseudouridine synthase A from Treponema denticola (strain ATCC 35405 / DSM 14222 / CIP 103919 / JCM 8153 / KCTC 15104).